The chain runs to 225 residues: UPF0758 protein Shew_3481 (225 aa).

Residues 102–224 (ILSDPDLTRD…IVSFAERGWI (123 aa)) enclose the MPN domain. Residues His-173, His-175, and Asp-186 each coordinate Zn(2+). Positions 173–186 (HNHPSGGAEPSHAD) match the JAMM motif motif.

The protein belongs to the UPF0758 family.

The polypeptide is UPF0758 protein Shew_3481 (Shewanella loihica (strain ATCC BAA-1088 / PV-4)).